A 327-amino-acid polypeptide reads, in one-letter code: Interleukin-12 subunit beta (327 aa).

An N-terminal signal peptide occupies residues 1 to 22 (MCHQKLTISWFAVVLLASPLMA). The Ig-like C2-type domain occupies 23 to 106 (IWELEKDVYV…LSHSRLLLHK (84 aa)). Cys50 and Cys90 form a disulfide bridge. N-linked (GlcNAc...) asparagine glycans are attached at residues Asn125, Asn135, Asn223, and Asn315. In terms of domain architecture, Fibronectin type-III spans 238-327 (PPKNLQLKPL…WSRWVSVPCS (90 aa)).

The protein belongs to the IL-12B family. As to quaternary structure, heterodimer with IL12A; disulfide-linked. The heterodimer is known as interleukin IL-12. Heterodimer with IL23A; disulfide-linked. The heterodimer is known as interleukin IL-23. Also secreted as a monomer. Interacts with NBR1; this interaction promotes IL-12 secretion.

The protein localises to the secreted. In terms of biological role, cytokine that can act as a growth factor for activated T and NK cells, enhance the lytic activity of NK/lymphokine-activated killer cells, and stimulate the production of IFN-gamma by resting PBMC. Associates with IL23A to form the IL-23 interleukin, a heterodimeric cytokine which functions in innate and adaptive immunity. IL-23 may constitute with IL-17 an acute response to infection in peripheral tissues. IL-23 binds to a heterodimeric receptor complex composed of IL12RB1 and IL23R, activates the Jak-Stat signaling cascade, stimulates memory rather than naive T-cells and promotes production of pro-inflammatory cytokines. IL-23 induces autoimmune inflammation and thus may be responsible for autoimmune inflammatory diseases and may be important for tumorigenesis. This is Interleukin-12 subunit beta (IL12B) from Mesocricetus auratus (Golden hamster).